A 284-amino-acid polypeptide reads, in one-letter code: Alpha-S1-casein (284 aa).

A signal peptide spans Met-1–Ala-15. 2 disordered regions span residues Arg-21–Gln-44 and Ser-78–Glu-111. Low complexity-rich tracts occupy residues Ala-24–Ser-36 and Ser-78–Ser-99. Ser-79, Ser-93, Ser-94, Ser-95, Ser-96, Ser-97, Ser-98, and Ser-99 each carry phosphoserine. Repeat copies occupy residues Leu-138–Ser-143, Leu-144–Ser-149, Leu-150–Ser-155, Leu-156–Leu-161, Leu-162–Ser-167, Leu-168–Ala-173, Leu-174–Ser-179, Leu-180–Ser-185, Leu-186–Ser-191, and Leu-192–His-197. The interval Leu-138–His-197 is 10 X 6 AA tandem repeats.

Belongs to the alpha-casein family. In terms of tissue distribution, mammary gland specific. Secreted in milk.

The protein localises to the secreted. In terms of biological role, important role in the capacity of milk to transport calcium phosphate. This is Alpha-S1-casein (Csn1s1) from Rattus norvegicus (Rat).